We begin with the raw amino-acid sequence, 576 residues long: MRRVTRTIAAAGAAIACCVTMTACSSPFDLPISGSVQTLAPVEQQTQRVYTNPQGPADDAQPETIVKGFYDAMPAGVQSDGYRVAREFLTGSASAGWNGDSAALVYSGTPDFRRRANTISAPQGAESSLIVEVELQVVGSLDSHGVYTPSNSTQTRRLPYTLMKKSGQWRISSLESGVVISTADFEQVFRQVSVYQVSTSGKQLIPDIRWLSWRNWRTQAVGEVLSDAPSWLEGVLRGAGLSTIKLAVDSVPVKNNVVEIHLNSGINALNEEERGLLVHRIRLTMGDGNAEYALRITGDGVDYSDADANVKLTTEQPTAGVYTLTGGHIVSLASSSPLRVGEAPGYDDARGFVFSSSGGAVLRADGVVECLKSDGASCGVMFSGEPMRSITEGLDGEVWAVSENGRELHVSDGGKETDLKLDWLGAADSIVALAVSPEGCRLALAVEGEDTNGVMMTGVARNGDKTLSGLSKAATQVSVLRHVTMLTFYNDLNLVYATTPPEGNSEQQEAWRQMAPGPANAQRLPNGIITSMASGQISLSRRLAIVDDLGIVRSVSGSLDGSWTIADSQVTALGAQ.

The N-terminal stretch at 1 to 16 (MRRVTRTIAAAGAAIA) is a signal peptide. Cysteine 17 is lipidated: N-palmitoyl cysteine. A lipid anchor (S-diacylglycerol cysteine) is attached at cysteine 17.

It belongs to the LpqB lipoprotein family.

Its subcellular location is the cell membrane. The chain is Lipoprotein LpqB from Bifidobacterium longum (strain NCC 2705).